We begin with the raw amino-acid sequence, 182 residues long: MASELDGLPVIATRREEAEGFLQGLVSKSLGWARKYSLFTYPFVTACCGMEYMTMASARYDSDRFGAAMPRFSPRQADLLMVVGTVNCKQAPILQRVYEQMADPKWVMAFGVCASSGGFYDNYATVQGIDRVIPVDVYVPGCPPRPEQVLDGIMLLQKKIQNQSHKLIDRTPLPVISGGAGR.

4 residues coordinate [4Fe-4S] cluster: cysteine 47, cysteine 48, cysteine 113, and cysteine 142.

This sequence belongs to the complex I 20 kDa subunit family. In terms of assembly, NDH-1 is composed of 14 different subunits. Subunits NuoB, C, D, E, F, and G constitute the peripheral sector of the complex. [4Fe-4S] cluster is required as a cofactor.

It localises to the cell inner membrane. It catalyses the reaction a quinone + NADH + 5 H(+)(in) = a quinol + NAD(+) + 4 H(+)(out). In terms of biological role, NDH-1 shuttles electrons from NADH, via FMN and iron-sulfur (Fe-S) centers, to quinones in the respiratory chain. The immediate electron acceptor for the enzyme in this species is believed to be ubiquinone. Couples the redox reaction to proton translocation (for every two electrons transferred, four hydrogen ions are translocated across the cytoplasmic membrane), and thus conserves the redox energy in a proton gradient. The polypeptide is NADH-quinone oxidoreductase subunit B (Anaeromyxobacter dehalogenans (strain 2CP-1 / ATCC BAA-258)).